Consider the following 786-residue polypeptide: Endonuclease MutS2 (786 aa).

332 to 339 provides a ligand contact to ATP; the sequence is GPNTGGKT. One can recognise a Smr domain in the interval 711–786; it reads VDLRGMDSIE…GTGVTIVELK (76 aa).

It belongs to the DNA mismatch repair MutS family. MutS2 subfamily. As to quaternary structure, homodimer. Binds to stalled ribosomes, contacting rRNA.

Its function is as follows. Endonuclease that is involved in the suppression of homologous recombination and thus may have a key role in the control of bacterial genetic diversity. Functionally, acts as a ribosome collision sensor, splitting the ribosome into its 2 subunits. Detects stalled/collided 70S ribosomes which it binds and splits by an ATP-hydrolysis driven conformational change. Acts upstream of the ribosome quality control system (RQC), a ribosome-associated complex that mediates the extraction of incompletely synthesized nascent chains from stalled ribosomes and their subsequent degradation. Probably generates substrates for RQC. The polypeptide is Endonuclease MutS2 (Clostridium kluyveri (strain NBRC 12016)).